We begin with the raw amino-acid sequence, 206 residues long: Dephospho-CoA kinase (206 aa).

Residues 4–200 (TVALTGGIGS…ASYLKLASQF (197 aa)) enclose the DPCK domain. 12 to 17 (GSGKST) lines the ATP pocket.

The protein belongs to the CoaE family.

The protein localises to the cytoplasm. The catalysed reaction is 3'-dephospho-CoA + ATP = ADP + CoA + H(+). It participates in cofactor biosynthesis; coenzyme A biosynthesis; CoA from (R)-pantothenate: step 5/5. Its function is as follows. Catalyzes the phosphorylation of the 3'-hydroxyl group of dephosphocoenzyme A to form coenzyme A. The chain is Dephospho-CoA kinase from Salmonella paratyphi A (strain ATCC 9150 / SARB42).